The primary structure comprises 400 residues: Tryptophan synthase beta chain (400 aa).

The residue at position 90 (Lys-90) is an N6-(pyridoxal phosphate)lysine.

Belongs to the TrpB family. As to quaternary structure, tetramer of two alpha and two beta chains. Pyridoxal 5'-phosphate is required as a cofactor.

It carries out the reaction (1S,2R)-1-C-(indol-3-yl)glycerol 3-phosphate + L-serine = D-glyceraldehyde 3-phosphate + L-tryptophan + H2O. It functions in the pathway amino-acid biosynthesis; L-tryptophan biosynthesis; L-tryptophan from chorismate: step 5/5. Its function is as follows. The beta subunit is responsible for the synthesis of L-tryptophan from indole and L-serine. This Alkaliphilus metalliredigens (strain QYMF) protein is Tryptophan synthase beta chain.